The following is a 92-amino-acid chain: Cell division protein FtsB (92 aa).

At 1 to 3 (MKW) the chain is on the cytoplasmic side. A helical membrane pass occupies residues 4–21 (VTVVLSFALVCCQYSLWF). The Periplasmic segment spans residues 22-92 (GKGSIGRNSS…TFYRLIRHNR (71 aa)). Residues 28 to 50 (RNSSLREQIAVQEEKNQTLALRN) adopt a coiled-coil conformation.

This sequence belongs to the FtsB family. As to quaternary structure, part of a complex composed of FtsB, FtsL and FtsQ.

Its subcellular location is the cell inner membrane. Essential cell division protein. May link together the upstream cell division proteins, which are predominantly cytoplasmic, with the downstream cell division proteins, which are predominantly periplasmic. The chain is Cell division protein FtsB from Neisseria meningitidis serogroup C (strain 053442).